The sequence spans 3122 residues: Abnormal spindle-like microcephaly-associated protein homolog (3122 aa).

Disordered stretches follow at residues M1–P26 and K139–F169. The segment covering P10 to P21 has biased composition (basic and acidic residues). The sufficient for interaction with KATNA1:KATNB1 stretch occupies residues S289–Q388. Phosphoserine is present on residues S348, S373, and S573. Positions P579–E600 are disordered. Residues K888 to Q1024 enclose the Calponin-homology (CH) 1 domain. Residues V1025 to H1045 are a coiled coil. S1071 carries the post-translational modification Phosphoserine. Positions G1078–L1229 constitute a Calponin-homology (CH) 2 domain. 32 consecutive IQ domains span residues E1234–A1263, Q1315–Q1346, Q1410–Q1439, K1504–Q1535, L1550–T1579, T1600–K1629, A1623–K1652, V1696–S1725, Q1719–Q1750, V1769–T1798, Q1792–K1821, T1842–K1871, Q1865–Q1896, L1915–Q1946, Q1938–Q1967, T1988–T2017, C2011–Q2042, L2061–E2092, T2134–Q2165, M2157–Q2188, L2207–Q2238, M2230–Q2261, L2279–Q2310, M2302–Q2333, Q2343–Q2374, M2366–Q2397, L2416–Q2447, Q2491–Q2522, K2602–E2633, R2674–Q2705, L2724–H2755, and I2849–S2880.

As to quaternary structure, interacts with KATNA1 and KATNB1; katanin complex formation KATNA1:KATNB1 is required for the association. In terms of tissue distribution, expressed in fetal brain, peripheral nervous system, liver and spleen. In the adult, expressed exclusively in testis, ovary and spleen.

It localises to the cytoplasm. The protein localises to the cytoskeleton. Its subcellular location is the spindle. It is found in the nucleus. Functionally, involved in mitotic spindle regulation and coordination of mitotic processes. The function in regulating microtubule dynamics at spindle poles including spindle orientation, astral microtubule density and poleward microtubule flux seem to depend on its association with the katanin complex formed by KATNA1 and KATNB1. Enhances the microtubule lattice severing activity of KATNA1 by recruiting the katanin complex to microtubules. Can block microtubule minus-end growth and reversely this function can be enhanced by the katanin complex. May have a preferential role in regulating neurogenesis. This is Abnormal spindle-like microcephaly-associated protein homolog (Aspm) from Mus musculus (Mouse).